Reading from the N-terminus, the 435-residue chain is Diguanylate cyclase TpbB (435 aa).

At 1 to 22 the chain is on the cytoplasmic side; that stretch reads MNRRRRYTGSNPSLRRVLYRAH. The helical transmembrane segment at 23-43 threads the bilayer; sequence LGVALVAVFTAGLAVTLVGLL. At 44–154 the chain is on the periplasmic side; sequence TLRAYADPNQ…VKGSGGSLLR (111 aa). Residues 155–175 form a helical membrane-spanning segment; the sequence is FLLTGFAGMVLCLLLTALGAF. Over 176–435 the chain is Cytoplasmic; the sequence is YLSRRLVRGI…DSATPEAPPK (260 aa). The region spanning 183–236 is the HAMP domain; sequence RGIVGPLDQLAKVAHTVRRERDFEKRVPEAGIAELSQLGEDFNALLDELESWQA. Residues 279–415 form the GGDEF domain; it reads EQLAVLFIDS…GSRRLAELND (137 aa). 2 residues coordinate Mg(2+): Ser-288 and Asp-330. The active-site Proton acceptor is the Asp-330. Residues 413-426 are compositionally biased toward basic and acidic residues; that stretch reads LNDPRILQEEKEID. The segment at 413–435 is disordered; the sequence is LNDPRILQEEKEIDSATPEAPPK.

As to quaternary structure, homodimer. Interacts with YfiR. Mg(2+) is required as a cofactor. In terms of processing, phosphorylated at both Tyr residues and Ser/Thr residues. Dephosphorylated and inactivated by TpbA.

It is found in the cell inner membrane. It catalyses the reaction 2 GTP = 3',3'-c-di-GMP + 2 diphosphate. Its pathway is purine metabolism; 3',5'-cyclic di-GMP biosynthesis. With respect to regulation, activity is tightly controlled by YfiR, a small periplasmic protein, and the OmpA/Pal-like outer-membrane lipoprotein YfiB. Diguanylate cyclase activity is inhibited by the specific interaction of YfiR with the TpbB periplasmic domain and is activated by YfiB, which releases the YfiR-mediated repression through sequestration of YfiR to the outer membrane. Release of repression leads to a conformational shift in TpbB/YfiN that propagates through the PAS and transmembrane domains to switch the cytoplasmic HAMP domain from an inactive to an active conformation and activate the C-terminal catalytic GGDEF domain. Thus, TpbB/YfiN appears to function by switching between discrete inactive and active functional states depending on the presence or absence of bound YfiR. Activity is also controlled by dephosphorylation of the periplasmic domain by the tyrosine phosphatase TpbA. These two mechanisms of regulation could in principle work in parallel or as part of the same regulatory pathway. Does not undergo product feedback inhibition. Its function is as follows. Catalyzes the synthesis of cyclic-di-GMP (c-di-GMP) via the condensation of 2 GTP molecules. Part of the YfiB-TpbB-YfiR (or yfiBNR) system, encoding a tripartite signaling module that modulates intracellular c-di-GMP levels. The system is a key regulator of the small colony variant (SCV) phenotype, and plays an important role in biofilm formation and in vivo persistence. The c-di-GMP produced by TpbB/YfiN stimulates the production of the Pel and Psl exopolysaccharides, which promotes surface attachment, generates an SCV phenotype and confers resistance against phagocytosis. The polypeptide is Diguanylate cyclase TpbB (Pseudomonas aeruginosa (strain ATCC 15692 / DSM 22644 / CIP 104116 / JCM 14847 / LMG 12228 / 1C / PRS 101 / PAO1)).